We begin with the raw amino-acid sequence, 244 residues long: Carbonyl reductase [NADPH] 2 (244 aa).

An NADP(+)-binding site is contributed by 11-39; sequence LVTGAGKGIGRDTVKALHVSGARVVAVTR. Ser-136 provides a ligand contact to substrate. The Proton acceptor role is filled by Tyr-149. At Ser-176 the chain carries Phosphoserine.

This sequence belongs to the short-chain dehydrogenases/reductases (SDR) family. Homotetramer. In terms of tissue distribution, lung (ciliated cells, non-ciliated bronchiolar cells and type-II alveolar pneumocytes). Low expression in all extrapulmonary tissues, including adipose tissue.

It is found in the mitochondrion matrix. It catalyses the reaction a secondary alcohol + NADP(+) = a ketone + NADPH + H(+). Allosteric enzyme exhibiting negative cooperativity. Activated 2-5 fold by fatty acids. May function in the pulmonary metabolism of endogenous carbonyl compounds, such as aliphatic aldehydes and ketones derived from lipid peroxidation, 3-ketosteroids and fatty aldehydes, as well as in xenobiotic metabolism. The chain is Carbonyl reductase [NADPH] 2 (CBR2) from Sus scrofa (Pig).